A 163-amino-acid polypeptide reads, in one-letter code: 3-isopropylmalate dehydratase small subunit (163 aa).

Belongs to the LeuD family. LeuD type 2 subfamily. As to quaternary structure, heterodimer of LeuC and LeuD.

It carries out the reaction (2R,3S)-3-isopropylmalate = (2S)-2-isopropylmalate. It participates in amino-acid biosynthesis; L-leucine biosynthesis; L-leucine from 3-methyl-2-oxobutanoate: step 2/4. Functionally, catalyzes the isomerization between 2-isopropylmalate and 3-isopropylmalate, via the formation of 2-isopropylmaleate. The sequence is that of 3-isopropylmalate dehydratase small subunit from Thermococcus kodakarensis (strain ATCC BAA-918 / JCM 12380 / KOD1) (Pyrococcus kodakaraensis (strain KOD1)).